We begin with the raw amino-acid sequence, 393 residues long: NAD(P)H-quinone oxidoreductase subunit H, chloroplastic (393 aa).

The protein belongs to the complex I 49 kDa subunit family. NDH is composed of at least 16 different subunits, 5 of which are encoded in the nucleus.

It localises to the plastid. It is found in the chloroplast thylakoid membrane. The enzyme catalyses a plastoquinone + NADH + (n+1) H(+)(in) = a plastoquinol + NAD(+) + n H(+)(out). It catalyses the reaction a plastoquinone + NADPH + (n+1) H(+)(in) = a plastoquinol + NADP(+) + n H(+)(out). NDH shuttles electrons from NAD(P)H:plastoquinone, via FMN and iron-sulfur (Fe-S) centers, to quinones in the photosynthetic chain and possibly in a chloroplast respiratory chain. The immediate electron acceptor for the enzyme in this species is believed to be plastoquinone. Couples the redox reaction to proton translocation, and thus conserves the redox energy in a proton gradient. This is NAD(P)H-quinone oxidoreductase subunit H, chloroplastic from Vitis vinifera (Grape).